A 131-amino-acid chain; its full sequence is Small ribosomal subunit protein uS11 (131 aa).

The protein belongs to the universal ribosomal protein uS11 family. Part of the 30S ribosomal subunit. Interacts with proteins S7 and S18. Binds to IF-3.

Located on the platform of the 30S subunit, it bridges several disparate RNA helices of the 16S rRNA. Forms part of the Shine-Dalgarno cleft in the 70S ribosome. This is Small ribosomal subunit protein uS11 from Deinococcus geothermalis (strain DSM 11300 / CIP 105573 / AG-3a).